A 167-amino-acid chain; its full sequence is Phospholipase A2 (167 aa).

The Ca(2+) site is built by Trp38, Gly40, and Gly42. 5 disulfide bridges follow: Cys39–Cys61, Cys60–Cys99, Cys67–Cys92, Cys90–Cys127, and Cys132–Cys144. An N-linked (GlcNAc...) asparagine glycan is attached at Asn47. His64 is a catalytic residue. Asp65 is a Ca(2+) binding site. The propeptide occupies 136-140 (ARSAR).

The protein belongs to the phospholipase A2 family. Group III subfamily. As to quaternary structure, heterodimer composed of a large subunit and a small subunit; disulfide-linked. Requires Ca(2+) as cofactor. Expressed by the venom gland.

Its subcellular location is the secreted. It catalyses the reaction a 1,2-diacyl-sn-glycero-3-phosphocholine + H2O = a 1-acyl-sn-glycero-3-phosphocholine + a fatty acid + H(+). In terms of biological role, phospholipase toxin, which catalyzes the calcium-dependent hydrolysis of the 2-acyl groups in 3-sn-phosphoglycerides. Inhibits both skeletal (RYR1) and cardiac (RYR2) ryanodine receptors (calcium release channels). Probably blocks ryanodine receptors by generating a lipid product. Shows hemolytic activity, but it is not know if it is direct or indirect. This is Phospholipase A2 from Hottentotta tamulus (Eastern Indian scorpion).